The sequence spans 364 residues: Chorismate synthase (364 aa).

Arginine 48 and arginine 54 together coordinate NADP(+). Residues 125–127, 238–239, glycine 278, 293–297, and arginine 319 each bind FMN; these read RSS, NA, and KPTSS.

It belongs to the chorismate synthase family. Homotetramer. Requires FMNH2 as cofactor.

The enzyme catalyses 5-O-(1-carboxyvinyl)-3-phosphoshikimate = chorismate + phosphate. Its pathway is metabolic intermediate biosynthesis; chorismate biosynthesis; chorismate from D-erythrose 4-phosphate and phosphoenolpyruvate: step 7/7. Functionally, catalyzes the anti-1,4-elimination of the C-3 phosphate and the C-6 proR hydrogen from 5-enolpyruvylshikimate-3-phosphate (EPSP) to yield chorismate, which is the branch point compound that serves as the starting substrate for the three terminal pathways of aromatic amino acid biosynthesis. This reaction introduces a second double bond into the aromatic ring system. The chain is Chorismate synthase from Shewanella frigidimarina (strain NCIMB 400).